Here is a 379-residue protein sequence, read N- to C-terminus: Histidinol-phosphate aminotransferase (379 aa).

At Lys236 the chain carries N6-(pyridoxal phosphate)lysine.

Belongs to the class-II pyridoxal-phosphate-dependent aminotransferase family. Histidinol-phosphate aminotransferase subfamily. In terms of assembly, homodimer. Pyridoxal 5'-phosphate serves as cofactor.

It catalyses the reaction L-histidinol phosphate + 2-oxoglutarate = 3-(imidazol-4-yl)-2-oxopropyl phosphate + L-glutamate. Its pathway is amino-acid biosynthesis; L-histidine biosynthesis; L-histidine from 5-phospho-alpha-D-ribose 1-diphosphate: step 7/9. The sequence is that of Histidinol-phosphate aminotransferase from Desulfotalea psychrophila (strain LSv54 / DSM 12343).